Reading from the N-terminus, the 380-residue chain is MTVNLGMPTPPIPTLAPRRKTHQIKVGDVLVGGDAPISVQSMTTTKTHDVGATLQQIAALTAAGCDIVRVACPTDKDAEVLPIIAKRSQIPVIADIHFQPKYVFQAIEAGCGAVRVNPGNIRKFDDQIESICQAATEHGTSIRIGVNAGSLDKRLLDKYGAPTAEAMVESALWEASLFEQYGFRDFKISVKHHDPVVMIRAYEQLAAKCDYPLHLGVTEAGPAFQGTIKSAVAFGHLLAEGIGDTIRVSLSADPVEEVKVGIKILESLNLRPRGLEIVSCPSCGRCQVDVLTLANDVTDALEGIDAPLRVAVMGCVVNGLGEGREADLGVAAGNGKGKIFKHGEVIRTVPEGEIVQFLVQEANRMADEMDTTGAVEVTVS.

[4Fe-4S] cluster-binding residues include cysteine 280, cysteine 283, cysteine 315, and glutamate 322.

Belongs to the IspG family. The cofactor is [4Fe-4S] cluster.

The enzyme catalyses (2E)-4-hydroxy-3-methylbut-2-enyl diphosphate + oxidized [flavodoxin] + H2O + 2 H(+) = 2-C-methyl-D-erythritol 2,4-cyclic diphosphate + reduced [flavodoxin]. It participates in isoprenoid biosynthesis; isopentenyl diphosphate biosynthesis via DXP pathway; isopentenyl diphosphate from 1-deoxy-D-xylulose 5-phosphate: step 5/6. Its function is as follows. Converts 2C-methyl-D-erythritol 2,4-cyclodiphosphate (ME-2,4cPP) into 1-hydroxy-2-methyl-2-(E)-butenyl 4-diphosphate. This Cutibacterium acnes (strain DSM 16379 / KPA171202) (Propionibacterium acnes) protein is 4-hydroxy-3-methylbut-2-en-1-yl diphosphate synthase (flavodoxin).